Consider the following 460-residue polypeptide: Putative glycoside/cation symporter YagG (460 aa).

Over 1–9 (MTQLTMKDK) the chain is Cytoplasmic. The next 2 membrane-spanning stretches (helical) occupy residues 10–30 (IGYG…MFLL) and 31–51 (AYFY…LFLV). Residues 52 to 78 (SRVLDAVTDPLMGLLVDRTRTRHGQFR) are Cytoplasmic-facing. The chain crosses the membrane as a helical span at residues 79–99 (PFLLWGAIPFGIVCVLTFYTP). Residues 100–106 (DFSAQGK) are Periplasmic-facing. The chain crosses the membrane as a helical span at residues 107–127 (IIYACVTYILLTLVYTFVNVP). The Cytoplasmic portion of the chain corresponds to 128–150 (YCAMPGVITADPKERHALQSWRF). Residues 151 to 171 (FLAAAGSLAISGIALPLVSII) form a helical membrane-spanning segment. At 172 to 179 (GKGDEQVG) the chain is on the periplasmic side. Residues 180-200 (YFGAMCVLGLSGVVLLYVCFF) traverse the membrane as a helical segment. At 201 to 262 (TTKERYTFEV…FVKYVMDHPE (62 aa)) the chain is on the cytoplasmic side. A helical transmembrane segment spans residues 263–283 (LATQFLLYGSLATMFGSLCSS). Residues 284-308 (RLLGRFDRVTAFKWIIVAYSLISLL) are Periplasmic-facing. The chain crosses the membrane as a helical span at residues 309 to 329 (IFVTPAEHIALIFALNILFLF). The Cytoplasmic segment spans residues 330 to 366 (VFNTTTPLQWLMASDVVDYEESRSGRRLDGLVFSTYL). Residues 367-387 (FSLKIGLAIGGAVVGWILAYV) form a helical membrane-spanning segment. Over 388–405 (NYSASSSVQPVEVLTTIK) the chain is Periplasmic. A helical transmembrane segment spans residues 406 to 426 (ILFCVVPVVLYAGMFIMLSLY). The Cytoplasmic portion of the chain corresponds to 427-460 (KLTDARVEAISRQLIKHRAAQGEAVPDAATAASH).

Belongs to the sodium:galactoside symporter (TC 2.A.2) family.

It is found in the cell inner membrane. The sequence is that of Putative glycoside/cation symporter YagG (yagG) from Escherichia coli (strain K12).